The chain runs to 217 residues: Glyoxalase ElbB (217 aa).

Catalysis depends on C135, which acts as the Nucleophile.

Belongs to the peptidase C56 family. In terms of assembly, homodimer.

It catalyses the reaction glyoxal + H2O = glycolate + H(+). Functionally, displays glyoxalase activity, catalyzing the conversion of glyoxal to glycolate. However, this apparent glyoxalase activity may reflect a protein deglycase activity, which could be the primary function of this protein like other DJ-1 superfamily members such as PARK7, YajL, YhbO and HchA. Is not able to use methylglyoxal as substrate. This Escherichia coli (strain K12) protein is Glyoxalase ElbB.